Consider the following 299-residue polypeptide: Protoheme IX farnesyltransferase (299 aa).

8 helical membrane-spanning segments follow: residues 25 to 45, 51 to 71, 97 to 117, 119 to 139, 147 to 167, 173 to 193, 225 to 245, and 275 to 295; these read IVSLIVFTAIVGMFLSVPDLA, LFGTLGIGLGAASAAAINHLI, ALAFAITLGLSSMIILYFLVN, LTAWLTLASMIGYGIIYTAFL, IVLGGASGAMPPVLGWAAVTG, AFLLFLIIFVWTPPHFWALAL, FLLFAVSLLPFVSHMSGLLYL, and FGYSIVYLAALFAFLLVDHYL.

This sequence belongs to the UbiA prenyltransferase family. Protoheme IX farnesyltransferase subfamily.

It is found in the cell inner membrane. The catalysed reaction is heme b + (2E,6E)-farnesyl diphosphate + H2O = Fe(II)-heme o + diphosphate. Its pathway is porphyrin-containing compound metabolism; heme O biosynthesis; heme O from protoheme: step 1/1. Its function is as follows. Converts heme B (protoheme IX) to heme O by substitution of the vinyl group on carbon 2 of heme B porphyrin ring with a hydroxyethyl farnesyl side group. The chain is Protoheme IX farnesyltransferase from Nitrosococcus oceani (strain ATCC 19707 / BCRC 17464 / JCM 30415 / NCIMB 11848 / C-107).